The following is a 328-amino-acid chain: Biotin synthase (328 aa).

The 225-residue stretch at 49–273 (FNKEKIETCS…ICISRIIMPE (225 aa)) folds into the Radical SAM core domain. 3 residues coordinate [4Fe-4S] cluster: Cys-67, Cys-71, and Cys-74. [2Fe-2S] cluster is bound by residues Ser-110, Cys-142, Cys-201, and Arg-277.

It belongs to the radical SAM superfamily. Biotin synthase family. As to quaternary structure, homodimer. It depends on [4Fe-4S] cluster as a cofactor. [2Fe-2S] cluster serves as cofactor.

It carries out the reaction (4R,5S)-dethiobiotin + (sulfur carrier)-SH + 2 reduced [2Fe-2S]-[ferredoxin] + 2 S-adenosyl-L-methionine = (sulfur carrier)-H + biotin + 2 5'-deoxyadenosine + 2 L-methionine + 2 oxidized [2Fe-2S]-[ferredoxin]. Its pathway is cofactor biosynthesis; biotin biosynthesis; biotin from 7,8-diaminononanoate: step 2/2. In terms of biological role, catalyzes the conversion of dethiobiotin (DTB) to biotin by the insertion of a sulfur atom into dethiobiotin via a radical-based mechanism. The protein is Biotin synthase of Methanococcus vannielii (strain ATCC 35089 / DSM 1224 / JCM 13029 / OCM 148 / SB).